A 155-amino-acid chain; its full sequence is Small ribosomal subunit protein uS7cz/uS7cy (155 aa).

This sequence belongs to the universal ribosomal protein uS7 family. As to quaternary structure, part of the 30S ribosomal subunit.

It is found in the plastid. The protein localises to the chloroplast. One of the primary rRNA binding proteins, it binds directly to 16S rRNA where it nucleates assembly of the head domain of the 30S subunit. In Anthoceros angustus (Hornwort), this protein is Small ribosomal subunit protein uS7cz/uS7cy (rps7-A).